Consider the following 286-residue polypeptide: Formamidopyrimidine-DNA glycosylase (286 aa).

The active-site Schiff-base intermediate with DNA is the proline 2. Glutamate 3 acts as the Proton donor in catalysis. Lysine 61 serves as the catalytic Proton donor; for beta-elimination activity. Histidine 103, arginine 122, and arginine 164 together coordinate DNA. The FPG-type zinc finger occupies 250–284 (NAYGQTGEPCGRCGTQIVRENFMNRGSHYCPNCQK). Arginine 274 serves as the catalytic Proton donor; for delta-elimination activity.

This sequence belongs to the FPG family. As to quaternary structure, monomer. Zn(2+) is required as a cofactor.

It catalyses the reaction Hydrolysis of DNA containing ring-opened 7-methylguanine residues, releasing 2,6-diamino-4-hydroxy-5-(N-methyl)formamidopyrimidine.. It carries out the reaction 2'-deoxyribonucleotide-(2'-deoxyribose 5'-phosphate)-2'-deoxyribonucleotide-DNA = a 3'-end 2'-deoxyribonucleotide-(2,3-dehydro-2,3-deoxyribose 5'-phosphate)-DNA + a 5'-end 5'-phospho-2'-deoxyribonucleoside-DNA + H(+). In terms of biological role, involved in base excision repair of DNA damaged by oxidation or by mutagenic agents. Acts as a DNA glycosylase that recognizes and removes damaged bases. Has a preference for oxidized purines, such as 7,8-dihydro-8-oxoguanine (8-oxoG). Has AP (apurinic/apyrimidinic) lyase activity and introduces nicks in the DNA strand. Cleaves the DNA backbone by beta-delta elimination to generate a single-strand break at the site of the removed base with both 3'- and 5'-phosphates. The protein is Formamidopyrimidine-DNA glycosylase of Corynebacterium glutamicum (strain R).